The chain runs to 321 residues: tRNA-dihydrouridine synthase B (321 aa).

FMN contacts are provided by residues 16–18 and Gln70; that span reads PMA. Cys100 serves as the catalytic Proton donor. FMN contacts are provided by residues Lys139, 200–202, and 224–225; these read NGD and GR.

This sequence belongs to the Dus family. DusB subfamily. FMN serves as cofactor.

It carries out the reaction a 5,6-dihydrouridine in tRNA + NAD(+) = a uridine in tRNA + NADH + H(+). The catalysed reaction is a 5,6-dihydrouridine in tRNA + NADP(+) = a uridine in tRNA + NADPH + H(+). Catalyzes the synthesis of 5,6-dihydrouridine (D), a modified base found in the D-loop of most tRNAs, via the reduction of the C5-C6 double bond in target uridines. The chain is tRNA-dihydrouridine synthase B from Escherichia coli O157:H7.